Reading from the N-terminus, the 67-residue chain is Large ribosomal subunit protein bL35 (67 aa).

Belongs to the bacterial ribosomal protein bL35 family.

In Acidovorax ebreus (strain TPSY) (Diaphorobacter sp. (strain TPSY)), this protein is Large ribosomal subunit protein bL35.